A 907-amino-acid chain; its full sequence is Protein translocase subunit SecA (907 aa).

Residues Gln-87, 105 to 109 (GEGKT), and Asp-513 each bind ATP. The segment covering 841-853 (EAQRRAQAEEAAR) has biased composition (basic and acidic residues). The tract at residues 841–907 (EAQRRAQAEE…KYKQCHGQIN (67 aa)) is disordered. Over residues 854–865 (RAQAQHASAQSQ) the composition is skewed to low complexity. Residues 872-887 (EGHHQPVVRDERKVGR) are compositionally biased toward basic and acidic residues. Residues Cys-891, Cys-893, Cys-902, and His-903 each contribute to the Zn(2+) site.

This sequence belongs to the SecA family. In terms of assembly, monomer and homodimer. Part of the essential Sec protein translocation apparatus which comprises SecA, SecYEG and auxiliary proteins SecDF-YajC and YidC. Requires Zn(2+) as cofactor.

Its subcellular location is the cell inner membrane. The protein localises to the cytoplasm. The enzyme catalyses ATP + H2O + cellular proteinSide 1 = ADP + phosphate + cellular proteinSide 2.. Part of the Sec protein translocase complex. Interacts with the SecYEG preprotein conducting channel. Has a central role in coupling the hydrolysis of ATP to the transfer of proteins into and across the cell membrane, serving both as a receptor for the preprotein-SecB complex and as an ATP-driven molecular motor driving the stepwise translocation of polypeptide chains across the membrane. This is Protein translocase subunit SecA from Vibrio vulnificus (strain CMCP6).